A 503-amino-acid chain; its full sequence is Probable cytosol aminopeptidase (503 aa).

Mn(2+) is bound by residues Lys-271 and Asp-276. Lys-283 is a catalytic residue. Residues Asp-294, Asp-353, and Glu-355 each coordinate Mn(2+). Residue Arg-357 is part of the active site.

Belongs to the peptidase M17 family. It depends on Mn(2+) as a cofactor.

It localises to the cytoplasm. The enzyme catalyses Release of an N-terminal amino acid, Xaa-|-Yaa-, in which Xaa is preferably Leu, but may be other amino acids including Pro although not Arg or Lys, and Yaa may be Pro. Amino acid amides and methyl esters are also readily hydrolyzed, but rates on arylamides are exceedingly low.. It carries out the reaction Release of an N-terminal amino acid, preferentially leucine, but not glutamic or aspartic acids.. In terms of biological role, presumably involved in the processing and regular turnover of intracellular proteins. Catalyzes the removal of unsubstituted N-terminal amino acids from various peptides. The sequence is that of Probable cytosol aminopeptidase from Chlorobaculum parvum (strain DSM 263 / NCIMB 8327) (Chlorobium vibrioforme subsp. thiosulfatophilum).